A 143-amino-acid chain; its full sequence is Oxoglutarate dehydrogenase inhibitor (143 aa).

Threonine 14 carries the post-translational modification Phosphothreonine. The region spanning 68–117 is the FHA domain; that stretch reads TTAGRHPESDIFLDDVTVSRRHAEFRINEGEFEVVDVGSLNGTYVNREPR.

It localises to the cytoplasm. Its function is as follows. An essential component of the PknG signaling pathway. When unphosphorylated, it inhibits the activity of 2-oxoglutarate dehydrogenase. When phosphorylated it does not inhibit 2-oxoglutarate dehydrogenase. In Corynebacterium glutamicum (strain ATCC 13032 / DSM 20300 / JCM 1318 / BCRC 11384 / CCUG 27702 / LMG 3730 / NBRC 12168 / NCIMB 10025 / NRRL B-2784 / 534), this protein is Oxoglutarate dehydrogenase inhibitor (odhI).